A 561-amino-acid chain; its full sequence is Carbohydrate sulfotransferase 15 (561 aa).

The Cytoplasmic segment spans residues 1–80 (MRHCINCCIQ…FLRFKKGKRC (80 aa)). Residues 81–101 (SLVFGLIIMTLVMASYILSGA) traverse the membrane as a helical; Signal-anchor for type II membrane protein segment. Over 102–561 (HQELLISSPF…ADEAFAWKTT (460 aa)) the chain is Lumenal. 263-267 (KCGTT) lines the 3'-phosphoadenylyl sulfate pocket. N364 carries N-linked (GlcNAc...) asparagine glycosylation. 3'-phosphoadenylyl sulfate-binding residues include R392 and S400.

Belongs to the sulfotransferase 1 family. As to quaternary structure, homodimer; disulfide-linked (Potential). The relevance of homodimerization is however unsure. May interact with phosphorylated proteins in resting B-cells, including HCK. The cofactor is a divalent metal cation. Requires glutathione as cofactor. Post-translationally, glycosylated. As to expression, expressed in B-cell-enriched tissues but not in fetal or adult thymus. Expressed in fetal and adult spleen, lymph node, tonsil, bone marrow and peripheral leukocytes. Not expressed in T-cells. In pro-B, pre-B, and mature B-cell lines, it colocalizes with RAG1.

The protein resides in the golgi apparatus membrane. It carries out the reaction dermatan 4'-sulfate + n 3'-phosphoadenylyl sulfate = dermatan 4',6'-bissulfate + n adenosine 3',5'-bisphosphate + n H(+). The enzyme catalyses chondroitin 4'-sulfate + n 3'-phosphoadenylyl sulfate = chondroitin 4',6'-bissulfate + n adenosine 3',5'-bisphosphate + n H(+). Its activity is regulated as follows. Inhibited by phenyl beta-GalNAc(4,6-SO(4)). Its function is as follows. Sulfotransferase that transfers sulfate from 3'-phosphoadenosine 5'-phosphosulfate (PAPS) to the C-6 hydroxyl group of the GalNAc 4-sulfate residue of chondroitin sulfate A and forms chondroitin sulfate E containing GlcA-GalNAc(4,6-SO(4)) repeating units. It also transfers sulfate to a unique non-reducing terminal sequence, GalNAc(4SO4)-GlcA(2SO4)-GalNAc(6SO4), to yield a highly sulfated structure similar to the structure found in thrombomodulin chondroitin sulfate. May also act as a B-cell receptor involved in BCR ligation-mediated early activation that mediate regulatory signals key to B-cell development and/or regulation of B-cell-specific RAG expression; however such results are unclear in vivo. The sequence is that of Carbohydrate sulfotransferase 15 (CHST15) from Homo sapiens (Human).